The primary structure comprises 242 residues: tRNA pseudouridine synthase A (242 aa).

D51 serves as the catalytic Nucleophile. Y107 contacts substrate.

This sequence belongs to the tRNA pseudouridine synthase TruA family. Homodimer.

The catalysed reaction is uridine(38/39/40) in tRNA = pseudouridine(38/39/40) in tRNA. Formation of pseudouridine at positions 38, 39 and 40 in the anticodon stem and loop of transfer RNAs. This is tRNA pseudouridine synthase A from Helicobacter acinonychis (strain Sheeba).